The sequence spans 623 residues: MGLVLKQFNRKIRTALILAPLFTFAQIIIDLIIPSFLASAIAVVFSIVTLKQKEASGEGVAVDFIAESKLSFQSVQEAQIVLATSVILLALFGLVFGLISIFCASIVAGNTSYFLRRKIFRKIMHITAPSHDQYGSSTLLVRLTNDVYLMEIMTFDFLRLIVRAPFLFIGGLAFAIATNSDMSISLAITFPLTFLVIGILNKKSTPLFKNNQKSVDQINERVEEDVSGYKVVQSFNLKDTECLKFKAANARWTKSSTNSLFVNTLNIPFTFFFSSMTIIIALLLVFQLDNSVRVDPLPDNAAIRPSIFAFFQYNFYIVLGLILTSLTMVNFTRSRVALGRIKDVLNKPEIQQHVVPDQTVLAPSLEFKNVAFGLGNKENRDFLQDLNFKFEAGKTYGIVGPTGSGKSLIANIIGGLYEPNQGEIFVGGQSIKTIDSDYLAKMIGIVFQQNILFKGTIASNIKIGLETREDWKHEPDSKKDAAMKRAAAIACADTFIEKFSDTYDHTVEQLGKNLSGGQKQRVAIARTVITKPQILVLDDSMSALDALTEKKVRENIANELPGTTKIIISQNINSIKYAHKIMVIDNGRIAGFDSDAKLMQSCDIYVKMKQAQKDQGGDFDAVA.

An ABC transmembrane type-1 domain is found at 16–325 (LILAPLFTFA…YIVLGLILTS (310 aa)). The next 6 membrane-spanning stretches (helical) occupy residues 27–47 (IIID…VFSI), 86–106 (VILL…CASI), 157–177 (FLRL…FAIA), 180–200 (SDMS…IGIL), 266–286 (NIPF…LLVF), and 307–327 (IFAF…TSLT). The ABC transporter domain occupies 365–611 (LEFKNVAFGL…CDIYVKMKQA (247 aa)). ATP is bound at residue 400–407 (GPTGSGKS).

It belongs to the ABC transporter superfamily.

It is found in the cell membrane. The chain is Putative ABC transporter ATP-binding protein MG014 homolog from Mycoplasma pneumoniae (strain ATCC 29342 / M129 / Subtype 1) (Mycoplasmoides pneumoniae).